Here is a 461-residue protein sequence, read N- to C-terminus: D-phenylhydantoinase (461 aa).

Residues histidine 59, histidine 61, and lysine 151 each contribute to the a divalent metal cation site. At lysine 151 the chain carries N6-carboxylysine. Residue tyrosine 156 coordinates substrate. Histidine 182 and histidine 239 together coordinate a divalent metal cation. Position 286 (serine 286) interacts with substrate. Aspartate 313 lines the a divalent metal cation pocket. Asparagine 335 contacts substrate.

It belongs to the metallo-dependent hydrolases superfamily. Hydantoinase/dihydropyrimidinase family. In terms of assembly, homotetramer. The cofactor is a divalent metal cation. Carboxylation allows a single lysine to coordinate two divalent metal cations.

The enzyme catalyses D-5-phenylhydantoin + H2O = N-carbamoyl-D-phenylglycine + H(+). Its function is as follows. Catalyzes the stereospecific hydrolysis of the cyclic amide bond of D-hydantoin derivatives with an aromatic side chains at the 5'-position. Has no activity on dihydropyrimidines. The physiological function is unknown. This Escherichia coli O6:K15:H31 (strain 536 / UPEC) protein is D-phenylhydantoinase.